Here is a 360-residue protein sequence, read N- to C-terminus: Phospho-N-acetylmuramoyl-pentapeptide-transferase (360 aa).

The next 10 membrane-spanning stretches (helical) occupy residues 24–44 (RAVM…PWTI), 69–89 (GTPT…TLLW), 92–112 (WANP…ALGF), 133–153 (MVWQ…LAAN), 158–178 (ILIV…GFLV), 199–219 (GLAA…AYVS), 239–259 (VAIF…FNAY), 263–283 (VFMG…VAVI), 288–308 (FVLV…MLQV), and 337–357 (QVVV…LSTL).

This sequence belongs to the glycosyltransferase 4 family. MraY subfamily. Requires Mg(2+) as cofactor.

It is found in the cell inner membrane. It carries out the reaction UDP-N-acetyl-alpha-D-muramoyl-L-alanyl-gamma-D-glutamyl-meso-2,6-diaminopimeloyl-D-alanyl-D-alanine + di-trans,octa-cis-undecaprenyl phosphate = di-trans,octa-cis-undecaprenyl diphospho-N-acetyl-alpha-D-muramoyl-L-alanyl-D-glutamyl-meso-2,6-diaminopimeloyl-D-alanyl-D-alanine + UMP. It functions in the pathway cell wall biogenesis; peptidoglycan biosynthesis. In terms of biological role, catalyzes the initial step of the lipid cycle reactions in the biosynthesis of the cell wall peptidoglycan: transfers peptidoglycan precursor phospho-MurNAc-pentapeptide from UDP-MurNAc-pentapeptide onto the lipid carrier undecaprenyl phosphate, yielding undecaprenyl-pyrophosphoryl-MurNAc-pentapeptide, known as lipid I. The sequence is that of Phospho-N-acetylmuramoyl-pentapeptide-transferase from Neisseria gonorrhoeae (strain ATCC 700825 / FA 1090).